We begin with the raw amino-acid sequence, 348 residues long: Ferredoxin--NADP reductase 1 (348 aa).

FAD contacts are provided by Glu36, Lys44, Tyr48, Ile88, Pro123, Asp285, and Ser326. Residues 329 to 348 (EKFKKKNEQLKQEKQAQLMN) form a disordered region.

The protein belongs to the ferredoxin--NADP reductase type 2 family. As to quaternary structure, homodimer. FAD is required as a cofactor.

The enzyme catalyses 2 reduced [2Fe-2S]-[ferredoxin] + NADP(+) + H(+) = 2 oxidized [2Fe-2S]-[ferredoxin] + NADPH. The sequence is that of Ferredoxin--NADP reductase 1 from Shouchella clausii (strain KSM-K16) (Alkalihalobacillus clausii).